The chain runs to 444 residues: tRNA modification GTPase MnmE (444 aa).

Positions 25, 83, and 122 each coordinate (6S)-5-formyl-5,6,7,8-tetrahydrofolate. A TrmE-type G domain is found at Gly218 to Asp370. Residues Asn228–Ser233, Ser247–Thr253, and Asp272–Gly275 contribute to the GTP site. Residues Ser232 and Thr253 each contribute to the Mg(2+) site. Lys444 serves as a coordination point for (6S)-5-formyl-5,6,7,8-tetrahydrofolate.

Belongs to the TRAFAC class TrmE-Era-EngA-EngB-Septin-like GTPase superfamily. TrmE GTPase family. As to quaternary structure, homodimer. Heterotetramer of two MnmE and two MnmG subunits. K(+) serves as cofactor.

The protein resides in the cytoplasm. Its function is as follows. Exhibits a very high intrinsic GTPase hydrolysis rate. Involved in the addition of a carboxymethylaminomethyl (cmnm) group at the wobble position (U34) of certain tRNAs, forming tRNA-cmnm(5)s(2)U34. This Campylobacter curvus (strain 525.92) protein is tRNA modification GTPase MnmE.